The sequence spans 234 residues: ATP synthase subunit a 1 (234 aa).

The next 5 membrane-spanning stretches (helical) occupy residues 20–40, 76–96, 105–125, 162–184, and 195–215; these read ETVVTTWLIMLVLVVASILLT, LLPLIGTFWIFLPVANLLGVI, DLSVTAALALVVFFAVHAYGV, LFGNIMSLEMAALLILLVAGFLA, and EALVQAYIFGMLALIYVAGAM.

The protein belongs to the ATPase A chain family. In terms of assembly, F-type ATPases have 2 components, CF(1) - the catalytic core - and CF(0) - the membrane proton channel. CF(1) has five subunits: alpha(3), beta(3), gamma(1), delta(1), epsilon(1). CF(0) has three main subunits: a(1), b(2) and c(9-12). The alpha and beta chains form an alternating ring which encloses part of the gamma chain. CF(1) is attached to CF(0) by a central stalk formed by the gamma and epsilon chains, while a peripheral stalk is formed by the delta and b chains.

The protein resides in the cell inner membrane. Its function is as follows. Key component of the proton channel; it plays a direct role in the translocation of protons across the membrane. This Hahella chejuensis (strain KCTC 2396) protein is ATP synthase subunit a 1.